The sequence spans 490 residues: Betaine aldehyde dehydrogenase (490 aa).

The K(+) site is built by Ile27 and Asp93. NAD(+) is bound at residue 150-152 (GAW). The active-site Charge relay system is the Lys162. Residue 176-179 (KPSE) coordinates NAD(+). Residue Val180 coordinates K(+). 230-233 (GTDT) lines the NAD(+) pocket. Leu246 lines the K(+) pocket. Glu252 functions as the Proton acceptor in the catalytic mechanism. Gly254, Cys286, and Glu387 together coordinate NAD(+). The active-site Nucleophile is the Cys286. Position 286 is a cysteine sulfenic acid (-SOH) (Cys286). The K(+) site is built by Lys457 and Gly460. Glu464 functions as the Charge relay system in the catalytic mechanism.

This sequence belongs to the aldehyde dehydrogenase family. In terms of assembly, dimer of dimers. It depends on K(+) as a cofactor.

The catalysed reaction is betaine aldehyde + NAD(+) + H2O = glycine betaine + NADH + 2 H(+). It participates in amine and polyamine biosynthesis; betaine biosynthesis via choline pathway; betaine from betaine aldehyde: step 1/1. Involved in the biosynthesis of the osmoprotectant glycine betaine. Catalyzes the irreversible oxidation of betaine aldehyde to the corresponding acid. The protein is Betaine aldehyde dehydrogenase of Pseudomonas savastanoi pv. phaseolicola (strain 1448A / Race 6) (Pseudomonas syringae pv. phaseolicola (strain 1448A / Race 6)).